The sequence spans 220 residues: Ribosome maturation factor RimP (220 aa).

The span at 1–15 (MSQRGRATRPTGPTG) shows a compositional bias: low complexity. Disordered stretches follow at residues 1–35 (MSQRGRATRPTGPTGRPRRTGGQRSAGRVSRGGDL) and 184–220 (PGRVQVEFTRPGETDGADGADEAGDFDDDDDVEGEER). Residues 198–220 (DGADGADEAGDFDDDDDVEGEER) show a composition bias toward acidic residues.

Belongs to the RimP family.

The protein resides in the cytoplasm. Functionally, required for maturation of 30S ribosomal subunits. The chain is Ribosome maturation factor RimP from Salinispora tropica (strain ATCC BAA-916 / DSM 44818 / JCM 13857 / NBRC 105044 / CNB-440).